Reading from the N-terminus, the 59-residue chain is Large ribosomal subunit protein bL32 (59 aa).

The tract at residues 1–59 is disordered; sequence MAVQQNKKSPSKRGMHRSHDFLTTAPIAVEPTTGEVHLRHHVSPNGYYRGRKVVKTKND. Positions 49–59 are enriched in basic residues; it reads RGRKVVKTKND.

Belongs to the bacterial ribosomal protein bL32 family.

In Ralstonia pickettii (strain 12J), this protein is Large ribosomal subunit protein bL32.